Here is a 309-residue protein sequence, read N- to C-terminus: Porphobilinogen deaminase (309 aa).

C244 carries the post-translational modification S-(dipyrrolylmethanemethyl)cysteine.

Belongs to the HMBS family. Monomer. Dipyrromethane is required as a cofactor.

The catalysed reaction is 4 porphobilinogen + H2O = hydroxymethylbilane + 4 NH4(+). It participates in porphyrin-containing compound metabolism; protoporphyrin-IX biosynthesis; coproporphyrinogen-III from 5-aminolevulinate: step 2/4. In terms of biological role, tetrapolymerization of the monopyrrole PBG into the hydroxymethylbilane pre-uroporphyrinogen in several discrete steps. This chain is Porphobilinogen deaminase, found in Agrobacterium fabrum (strain C58 / ATCC 33970) (Agrobacterium tumefaciens (strain C58)).